The primary structure comprises 407 residues: WEB family protein At3g51720 (407 aa).

3 coiled-coil regions span residues 72–99 (KVLK…DKEN), 128–217 (SVGL…ARAA), and 247–278 (EEIL…EAEE).

This sequence belongs to the WEB family.

In Arabidopsis thaliana (Mouse-ear cress), this protein is WEB family protein At3g51720.